The primary structure comprises 356 residues: Alanine racemase, catabolic (356 aa).

Lysine 35 serves as the catalytic Proton acceptor; specific for D-alanine. Lysine 35 carries the N6-(pyridoxal phosphate)lysine modification. Arginine 130 is a substrate binding site. The active-site Proton acceptor; specific for L-alanine is tyrosine 253. Methionine 301 is a binding site for substrate.

It belongs to the alanine racemase family. Pyridoxal 5'-phosphate is required as a cofactor.

The catalysed reaction is L-alanine = D-alanine. In terms of biological role, isomerizes L-alanine to D-alanine which is then oxidized to pyruvate by DadA. In Salmonella typhi, this protein is Alanine racemase, catabolic (dadX).